A 593-amino-acid polypeptide reads, in one-letter code: Immunoglobulin G-binding protein G (593 aa).

Residues 1-33 (MEKEKKVKYFLRKSAFGLASVSAAFLVGSTVFA) form the signal peptide. 5 tandem repeats follow at residues 104-140 (LAKA…VKDL), 179-215 (LAEA…VKDL), 254-290 (LAEA…VKAL), 303-357 (TYKL…TVTE), and 373-427 (TYKL…TVTE). A 3 X 37 AA repeats region spans residues 104–290 (LAKAKADALK…AKTVEGVKAL (187 aa)). A 2 X 55 AA repeats region spans residues 303-427 (TYKLILNGKT…DATKTFTVTE (125 aa)). Residues 503–567 (PGDAPTEPEK…TLPTTGEGSN (65 aa)) are disordered. Residues 529–557 (AKDDAKKDDTKKEDAKKPEAKKEDAKKAE) show a composition bias toward basic and acidic residues. The 5 X 5 AA repeats of [DE]-D-A-K-K stretch occupies residues 531–555 (DDAKKDDTKKEDAKKPEAKKEDAKK). The LPXTG sorting signal signature appears at 559–563 (LPTTG). At Thr-562 the chain carries Pentaglycyl murein peptidoglycan amidated threonine. Residues 563–593 (GEGSNPFFTAAALAVMAGAGALAVASKRKED) constitute a propeptide, removed by sortase.

It is found in the secreted. Its subcellular location is the cell wall. The sequence is that of Immunoglobulin G-binding protein G (spg) from Streptococcus sp. group G.